The following is a 263-amino-acid chain: MPEGPEIRRAADNLEAAIKGKPLTDVWFAFAQLKPYESQLTGQLVTRIETRGKALLTHFSNGLTLYSHNQLYGVWRVIDTGEIPQTTRILRVRLQTADKTILLYSASDIEMLTAEQLTTHPFLQRVGPDVLDARLTPEEVKARLLSPRFRNRQFSGLLLDQSFLAGLGNYLRVEILWQVGLTGQHKAKDLNEAQLNALSHALLDIPRLSYTTRGQADENKHHGALFRFKLFHRDGEACERCGGIIEKTTLSSRPFYWCPHCQK.

Pro2 acts as the Schiff-base intermediate with DNA in catalysis. Glu3 acts as the Proton donor in catalysis. Residue Lys53 is the Proton donor; for beta-elimination activity of the active site. Positions 70, 125, and 169 each coordinate DNA. The FPG-type zinc-finger motif lies at 229-263 (KLFHRDGEACERCGGIIEKTTLSSRPFYWCPHCQK). The Proton donor; for delta-elimination activity role is filled by Arg253.

Belongs to the FPG family. Requires Zn(2+) as cofactor.

The catalysed reaction is 2'-deoxyribonucleotide-(2'-deoxyribose 5'-phosphate)-2'-deoxyribonucleotide-DNA = a 3'-end 2'-deoxyribonucleotide-(2,3-dehydro-2,3-deoxyribose 5'-phosphate)-DNA + a 5'-end 5'-phospho-2'-deoxyribonucleoside-DNA + H(+). Involved in base excision repair of DNA damaged by oxidation or by mutagenic agents. Acts as a DNA glycosylase that recognizes and removes damaged bases. Has a preference for oxidized pyrimidines, such as thymine glycol, 5,6-dihydrouracil and 5,6-dihydrothymine. Has AP (apurinic/apyrimidinic) lyase activity and introduces nicks in the DNA strand. Cleaves the DNA backbone by beta-delta elimination to generate a single-strand break at the site of the removed base with both 3'- and 5'-phosphates. The chain is Endonuclease 8 from Salmonella typhimurium (strain SL1344).